A 240-amino-acid polypeptide reads, in one-letter code: Eukaryotic translation initiation factor 3 subunit J (240 aa).

Residues 1-66 (MADDWESAAD…VPVKTKPSKA (66 aa)) form a disordered region. The span at 27 to 45 (GEDDDDDVKESWEDEEEKK) shows a compositional bias: acidic residues.

Belongs to the eIF-3 subunit J family. Component of the eukaryotic translation initiation factor 3 (eIF-3) complex. The eIF-3 complex interacts with pix.

It is found in the cytoplasm. Functionally, component of the eukaryotic translation initiation factor 3 (eIF-3) complex, which is involved in protein synthesis of a specialized repertoire of mRNAs and, together with other initiation factors, stimulates binding of mRNA and methionyl-tRNAi to the 40S ribosome. The eIF-3 complex specifically targets and initiates translation of a subset of mRNAs involved in cell proliferation. In Drosophila persimilis (Fruit fly), this protein is Eukaryotic translation initiation factor 3 subunit J.